Reading from the N-terminus, the 103-residue chain is MQPNDITFFQRFQDDILAGRKTITIRDESESHFKVGDILRVGRFEDEGYFCTIEVVGTSTVTLETLTEKHARQENMTLEELKHVIAGIYPDQTQFYVIDFKCL.

An ASCH domain is found at 6-94; sequence ITFFQRFQDD…IAGIYPDQTQ (89 aa). The active-site Proton acceptor is the K21. The active-site Nucleophile is the T24. E74 serves as the catalytic Proton donor.

Belongs to the N(4)-acetylcytidine amidohydrolase family.

The enzyme catalyses N(4)-acetylcytidine + H2O = cytidine + acetate + H(+). It carries out the reaction N(4)-acetyl-2'-deoxycytidine + H2O = 2'-deoxycytidine + acetate + H(+). It catalyses the reaction N(4)-acetylcytosine + H2O = cytosine + acetate + H(+). Functionally, catalyzes the hydrolysis of N(4)-acetylcytidine (ac4C). The polypeptide is N(4)-acetylcytidine amidohydrolase (Citrobacter koseri (strain ATCC BAA-895 / CDC 4225-83 / SGSC4696)).